A 521-amino-acid chain; its full sequence is BAR/IMD domain-containing adapter protein 2 (521 aa).

One can recognise an IMD domain in the interval 1-250 (MSLSRSEEMH…VQLMQQMGNS (250 aa)). Residues 132–153 (DALDKCQAELKKLRKKSQGSKN) adopt a coiled-coil conformation. S262, S324, S326, and S337 each carry phosphoserine. The disordered stretch occupies residues 297 to 370 (APVMNGVSGP…TLPRSSSMAA (74 aa)). Positions 321 to 333 (QPKSTSPPQSQSK) are enriched in low complexity. T341 is modified (phosphothreonine). S347 is modified (phosphoserine). A compositionally biased stretch (polar residues) spans 353–368 (SYATTENKTLPRSSSM). Residue T361 is modified to Phosphothreonine. Phosphoserine occurs at positions 367, 385, 396, and 455. An SH3 domain is found at 375–438 (NGRMRVKAIF…PFSYTRVLDN (64 aa)). Residues 450-471 (QGKSSSTGNLLDKEDLALPPPD) are disordered.

Homodimer. Interacts with CDC42 and RAC1 that have been activated by GTP binding. Interacts with ATN1, ADGRB1, DIAPH1, EPS8, SHANK1, SHANK2, SHANK3, TIAM1, WASF1 and WASF2. Interacts with ENAH after recruitment of CDC42. Phosphorylated on tyrosine residues by INSR in response to insulin treatment.

The protein resides in the cytoplasm. It localises to the membrane. Its subcellular location is the cell projection. The protein localises to the filopodium. It is found in the ruffle. The protein resides in the cytoskeleton. Adapter protein that links membrane-bound small G-proteins to cytoplasmic effector proteins. Necessary for CDC42-mediated reorganization of the actin cytoskeleton and for RAC1-mediated membrane ruffling. Involved in the regulation of the actin cytoskeleton by WASF family members and the Arp2/3 complex. Plays a role in neurite growth. Acts syngeristically with ENAH to promote filipodia formation. Plays a role in the reorganization of the actin cytoskeleton in response to bacterial infection. Participates in actin bundling when associated with EPS8, promoting filopodial protrusions. The protein is BAR/IMD domain-containing adapter protein 2 (BAIAP2) of Bos taurus (Bovine).